The following is a 213-amino-acid chain: Phosphoheptose isomerase (213 aa).

Residues 50-208 form the SIS domain; that stretch reads MAETFEGGGR…IDLVERMLGY (159 aa). 65–67 serves as a coordination point for substrate; sequence NGG. Positions 74 and 78 each coordinate Zn(2+). Substrate-binding positions include E78, 109-110, 135-137, S140, and Q188; these read ND and STS. Positions 188 and 196 each coordinate Zn(2+).

It belongs to the SIS family. GmhA subfamily. Requires Zn(2+) as cofactor.

Its subcellular location is the cytoplasm. It catalyses the reaction 2 D-sedoheptulose 7-phosphate = D-glycero-alpha-D-manno-heptose 7-phosphate + D-glycero-beta-D-manno-heptose 7-phosphate. Its pathway is carbohydrate biosynthesis; D-glycero-D-manno-heptose 7-phosphate biosynthesis; D-glycero-alpha-D-manno-heptose 7-phosphate and D-glycero-beta-D-manno-heptose 7-phosphate from sedoheptulose 7-phosphate: step 1/1. In terms of biological role, catalyzes the isomerization of sedoheptulose 7-phosphate in D-glycero-D-manno-heptose 7-phosphate. The sequence is that of Phosphoheptose isomerase from Chlorobium phaeovibrioides (strain DSM 265 / 1930) (Prosthecochloris vibrioformis (strain DSM 265)).